Reading from the N-terminus, the 2376-residue chain is MAG2-interacting protein 2 (2376 aa).

In terms of assembly, forms a complex with MAG2, ZW10/MIP1 and MIP3 on the endoplasmic reticulum.

It is found in the endoplasmic reticulum membrane. In terms of biological role, required for proper maturation of seed storage proteins. Forms a complex with MAG2, ZW10/MIP1 and MIP3 on the endoplasmic reticulum that may be responsible for efficient transport of seed storage proteins. This Arabidopsis thaliana (Mouse-ear cress) protein is MAG2-interacting protein 2.